We begin with the raw amino-acid sequence, 353 residues long: Peroxidase C1A (353 aa).

A signal peptide spans 1 to 30 (MHFSSSSTLFTCITLIPLVCLILHASLSDA). The residue at position 31 (glutamine 31) is a Pyrrolidone carboxylic acid. 4 disulfides stabilise this stretch: cysteine 41–cysteine 121, cysteine 74–cysteine 79, cysteine 127–cysteine 331, and cysteine 207–cysteine 239. Asparagine 43 is a glycosylation site (N-linked (GlcNAc...) asparagine). Histidine 72 (proton acceptor) is an active-site residue. Ca(2+) is bound by residues aspartate 73, valine 76, glycine 78, aspartate 80, and serine 82. The N-linked (GlcNAc...) asparagine glycan is linked to asparagine 87. Glutamate 94 is a Ca(2+) binding site. Residue proline 169 participates in substrate binding. N-linked (GlcNAc...) asparagine glycosylation occurs at asparagine 188. Histidine 200 provides a ligand contact to heme b. Threonine 201 contributes to the Ca(2+) binding site. Asparagine 216, asparagine 228, and asparagine 244 each carry an N-linked (GlcNAc...) asparagine glycan. Residues aspartate 252, threonine 255, and aspartate 260 each contribute to the Ca(2+) site. Residues asparagine 285 and asparagine 298 are each glycosylated (N-linked (GlcNAc...) asparagine). A propeptide spanning residues 339-353 (LLHDMVEVVDFVSSM) is cleaved from the precursor.

This sequence belongs to the peroxidase family. Classical plant (class III) peroxidase subfamily. Monomer. It depends on Ca(2+) as a cofactor. Heme b serves as cofactor.

Its subcellular location is the secreted. It is found in the vacuole. The enzyme catalyses 2 a phenolic donor + H2O2 = 2 a phenolic radical donor + 2 H2O. Its function is as follows. Removal of H(2)O(2), oxidation of toxic reductants, biosynthesis and degradation of lignin, suberization, auxin catabolism, response to environmental stresses such as wounding, pathogen attack and oxidative stress. These functions might be dependent on each isozyme/isoform in each plant tissue. The chain is Peroxidase C1A (PRXC1A) from Armoracia rusticana (Horseradish).